The sequence spans 395 residues: L-methionine gamma-lyase (395 aa).

Residues 56–58 and 86–87 contribute to the pyridoxal 5'-phosphate site; these read YTR and GM. Tyrosine 111 lines the substrate pocket. A pyridoxal 5'-phosphate-binding site is contributed by 206 to 208; the sequence is SAT. Lysine 209 bears the N6-(pyridoxal phosphate)lysine mark. Arginine 373 contacts substrate.

It belongs to the trans-sulfuration enzymes family. L-methionine gamma-lyase subfamily. As to quaternary structure, homotetramer. It depends on pyridoxal 5'-phosphate as a cofactor.

The catalysed reaction is L-methionine + H2O = methanethiol + 2-oxobutanoate + NH4(+). It catalyses the reaction L-homocysteine + H2O = 2-oxobutanoate + hydrogen sulfide + NH4(+) + H(+). It carries out the reaction L-cysteine + H2O = hydrogen sulfide + pyruvate + NH4(+) + H(+). In terms of biological role, catalyzes the alpha,gamma-elimination of L-methionine to produce methanethiol, 2-oxobutanoate and ammonia, and that of L-homocysteine. Can also use L-cysteine as substrate, catalyzing its alpha,beta-elimination; this activity seems to only minimally contribute to the production of hydrogen sulfide (H2S) by F.nucleatum in the oral cavity, which is toxic for a large variety of cells in periodontal regions. The polypeptide is L-methionine gamma-lyase (Fusobacterium nucleatum subsp. nucleatum (strain ATCC 25586 / DSM 15643 / BCRC 10681 / CIP 101130 / JCM 8532 / KCTC 2640 / LMG 13131 / VPI 4355)).